Reading from the N-terminus, the 296-residue chain is 4-hydroxybenzoate octaprenyltransferase (296 aa).

8 helical membrane-spanning segments follow: residues 28 to 48 (PIGI…AAEG), 52 to 72 (LSHV…GCAI), 102 to 122 (ALIL…CTNA), 146 to 166 (YYPQ…TFTA), 169 to 189 (GELP…TVGY), 219 to 239 (VIIL…GARF), 241 to 261 (LGGW…WEFW), and 275 to 295 (FLHN…DYAL).

The protein belongs to the UbiA prenyltransferase family. It depends on Mg(2+) as a cofactor.

The protein localises to the cell inner membrane. It carries out the reaction all-trans-octaprenyl diphosphate + 4-hydroxybenzoate = 4-hydroxy-3-(all-trans-octaprenyl)benzoate + diphosphate. It participates in cofactor biosynthesis; ubiquinone biosynthesis. Functionally, catalyzes the prenylation of para-hydroxybenzoate (PHB) with an all-trans polyprenyl group. Mediates the second step in the final reaction sequence of ubiquinone-8 (UQ-8) biosynthesis, which is the condensation of the polyisoprenoid side chain with PHB, generating the first membrane-bound Q intermediate 3-octaprenyl-4-hydroxybenzoate. In Pseudomonas fluorescens (strain ATCC BAA-477 / NRRL B-23932 / Pf-5), this protein is 4-hydroxybenzoate octaprenyltransferase.